Here is a 372-residue protein sequence, read N- to C-terminus: UDP-N-acetylglucosamine 2-epimerase (372 aa).

Residues arginine 10, lysine 15, aspartate 95, glutamate 117, histidine 212, glutamine 270, phenylalanine 275, 289 to 291 (SGG), glutamate 295, and arginine 312 each bind substrate.

It belongs to the UDP-N-acetylglucosamine 2-epimerase family.

The enzyme catalyses UDP-N-acetyl-alpha-D-glucosamine = UDP-N-acetyl-alpha-D-mannosamine. It participates in capsule biogenesis; capsule polysaccharide biosynthesis. Activated by UDP-GlcNAc and inhibited by 2-acetamidoglucal and UDP. Activity is strongly decreased in the presence of Co(2+) and abolished in the presence of Mn(2+) or Zn(2+). In terms of biological role, catalyzes the interconversion between UDP-N-acetylglucosamine (UDP-GlcNAc) and UDP-N-acetylmannosamine (UDP-ManNAc). Involved in the biosynthesis of the capsular polysaccharides. In vitro, can also use several chemoenzymatically synthesized UDP-ManNAc derivatives as substrates, with lower efficiency. The chain is UDP-N-acetylglucosamine 2-epimerase from Neisseria meningitidis serogroup A / serotype 4A (strain DSM 15465 / Z2491).